A 458-amino-acid polypeptide reads, in one-letter code: Divalent metal cation transporter MntH (458 aa).

A run of 11 helical transmembrane segments spans residues 38–58 (GFWK…VGYM), 76–96 (SLLS…AMAA), 119–139 (GGFL…AEII), 151–171 (MPLI…LLLM), 180–200 (AVVA…VILA), 223–243 (MLYL…LFLG), 275–295 (LTMA…LFFG), 315–335 (IVGA…LLAS), 370–390 (LMSV…EAKI), 393–413 (LLTF…IPLV), and 437–457 (FISG…LGFV).

It belongs to the NRAMP family.

Its subcellular location is the cell membrane. Its function is as follows. H(+)-stimulated, divalent metal cation uptake system. This is Divalent metal cation transporter MntH from Lacticaseibacillus casei (strain BL23) (Lactobacillus casei).